Here is a 299-residue protein sequence, read N- to C-terminus: Acetyl-hydrolase (299 aa).

The Involved in the stabilization of the negatively charged intermediate by the formation of the oxyanion hole motif lies at 73 to 75 (HGG). Residues serine 143, glutamate 237, and histidine 267 contribute to the active site.

Belongs to the 'GDXG' lipolytic enzyme family.

Its pathway is secondary metabolite biosynthesis; bialaphos biosynthesis. Functionally, this protein removes the N-acetyl group from bialaphos as one of the final steps of biosynthesis of phosphinothricin tripeptide (PTT), also known as bialaphos (BA), a natural-product antibiotic and potent herbicide. In Streptomyces hygroscopicus, this protein is Acetyl-hydrolase (bah).